Reading from the N-terminus, the 422-residue chain is NADP-dependent malic enzyme (422 aa).

Residue Tyr39 is the Proton donor of the active site. Lys94 acts as the Proton acceptor in catalysis. Lys94 is a binding site for substrate. The a divalent metal cation site is built by Glu136, Asp137, and Asp162. NADP(+) is bound by residues 195 to 198, Asn286, and Asn318; that span reads AGAA. Position 318 (Asn318) interacts with substrate.

Belongs to the malic enzymes family. Mg(2+) is required as a cofactor. It depends on Mn(2+) as a cofactor.

The enzyme catalyses (S)-malate + NADP(+) = pyruvate + CO2 + NADPH. It catalyses the reaction oxaloacetate + H(+) = pyruvate + CO2. The chain is NADP-dependent malic enzyme from Halomonas elongata (strain ATCC 33173 / DSM 2581 / NBRC 15536 / NCIMB 2198 / 1H9).